Reading from the N-terminus, the 361-residue chain is Gibberellin 20 oxidase 1-D (361 aa).

The Fe2OG dioxygenase domain occupies Gly-199–Pro-299. Fe cation contacts are provided by His-224, Asp-226, and His-280. Residue Arg-290 is part of the active site.

The protein belongs to the iron/ascorbate-dependent oxidoreductase family. GA20OX subfamily. Requires Fe cation as cofactor. L-ascorbate is required as a cofactor. As to expression, expressed in nodes and the ear of the elongating stem.

The enzyme catalyses gibberellin A12 + 2 2-oxoglutarate + 3 O2 + H(+) = gibberellin A9 + 2 succinate + 3 CO2 + 2 H2O. It carries out the reaction gibberellin A53 + 2 2-oxoglutarate + 3 O2 + H(+) = gibberellin A20 + 2 succinate + 3 CO2 + 2 H2O. Key oxidase enzyme in the biosynthesis of gibberellin that catalyzes the conversion of GA12 and GA53 to GA9 and GA20 respectively, via a three-step oxidation at C-20 of the GA skeleton. In Triticum aestivum (Wheat), this protein is Gibberellin 20 oxidase 1-D (GA20ox1D).